Here is a 245-residue protein sequence, read N- to C-terminus: Complement C1q subcomponent subunit A (245 aa).

Residues 1–22 (METSQGWLVACVLTMTLVWTVA) form the signal peptide. Residues 28–114 (APNGKDGAPG…NPGNIRDQPR (87 aa)) form a disordered region. The Collagen-like domain maps to 31–109 (GKDGAPGNPG…KGVKGNPGNI (79 aa)). A 4-hydroxyproline mark is found at Pro-39 and Pro-45. Lys-48 is modified (5-hydroxylysine). A glycan (O-linked (Gal...) hydroxylysine; alternate) is linked at Lys-48. Pro-54 bears the 4-hydroxyproline mark. Position 67 is a 5-hydroxylysine (Lys-67). Lys-67 carries an O-linked (Gal...) hydroxylysine; alternate glycan. A 4-hydroxyproline mark is found at Pro-79 and Pro-85. The segment covering 79-99 (PGNVGLPGPSGPLGDSGPQGL) has biased composition (low complexity). Lys-100 is modified (5-hydroxylysine). Lys-100 carries an O-linked (Gal...) hydroxylysine; alternate glycan. The 136-residue stretch at 110–245 (RDQPRPAFSA…FSGFLIFPSA (136 aa)) folds into the C1q domain. N-linked (GlcNAc...) asparagine glycosylation occurs at Asn-146. Residue Gln-199 coordinates Ca(2+).

Core component of the complement C1 complex, a calcium-dependent complex composed of 1 molecule of the C1Q subcomplex, 2 molecules of C1R and 2 molecules of C1S. The C1Q subcomplex is composed 18 subunits: 3 chains of C1QA, C1QB, and C1QC trimerize to form 6 collagen-like triple helices connected to six globular ligand-recognition modules (C1q domain). Interacts with CR1 (via Sushi 24 and Sushi 25 domains). Interacts (via C-terminus) with CD33; this interaction activates CD33 inhibitory motifs. In terms of processing, O-linked glycans are assumed to be the Glc-Gal disaccharides typically found as secondary modifications of hydroxylated lysines in collagen-like domains.

It localises to the secreted. Its subcellular location is the cell surface. The C1Q subcomplex is inhibited by sulfated molecules, such as triterpenoid sulfates, heparan sulfate, or chondroitin sulfates. Its function is as follows. Core component of the complement C1 complex, a multiprotein complex that initiates the classical pathway of the complement system, a cascade of proteins that leads to phagocytosis and breakdown of pathogens and signaling that strengthens the adaptive immune system. The classical complement pathway is initiated by the C1Q subcomplex of the C1 complex, which specifically binds IgG or IgM immunoglobulins complexed with antigens, forming antigen-antibody complexes on the surface of pathogens: C1QA, together with C1QB and C1QC, specifically recognizes and binds the Fc regions of IgG or IgM via its C1q domain. Immunoglobulin-binding activates the proenzyme C1R, which cleaves C1S, initiating the proteolytic cascade of the complement system. The C1Q subcomplex is activated by a hexamer of IgG complexed with antigens, while it is activated by a pentameric IgM. The C1Q subcomplex also recognizes and binds phosphatidylserine exposed on the surface of cells undergoing programmed cell death, possibly promoting activation of the complement system. In Mus musculus (Mouse), this protein is Complement C1q subcomponent subunit A.